A 122-amino-acid chain; its full sequence is Immunoglobulin lambda variable 8-61 (122 aa).

The N-terminal stretch at 1–24 (MSVPTMAWMMLLLGLLAYGSGVDS) is a signal peptide. The segment at 25 to 49 (QTVVTQEPSFSVSPGGTVTLTCGLS) is framework-1. Residues 25-122 (QTVVTQEPSF…YCVLYMGSGI (98 aa)) enclose the Ig-like domain. A disulfide bridge links Cys46 with Cys114. Residues 50 to 58 (SGSVSTSYY) are complementarity-determining-1. Residues 59-75 (PSWYQQTPGQAPRTLIY) are framework-2. The tract at residues 76 to 78 (STN) is complementarity-determining-2. The interval 79 to 114 (TRSSGVPDRFSGSILGNKAALTITGAQADDESDYYC) is framework-3. A complementarity-determining-3 region spans residues 115–122 (VLYMGSGI).

Immunoglobulins are composed of two identical heavy chains and two identical light chains; disulfide-linked.

It is found in the secreted. It localises to the cell membrane. In terms of biological role, v region of the variable domain of immunoglobulin light chains that participates in the antigen recognition. Immunoglobulins, also known as antibodies, are membrane-bound or secreted glycoproteins produced by B lymphocytes. In the recognition phase of humoral immunity, the membrane-bound immunoglobulins serve as receptors which, upon binding of a specific antigen, trigger the clonal expansion and differentiation of B lymphocytes into immunoglobulins-secreting plasma cells. Secreted immunoglobulins mediate the effector phase of humoral immunity, which results in the elimination of bound antigens. The antigen binding site is formed by the variable domain of one heavy chain, together with that of its associated light chain. Thus, each immunoglobulin has two antigen binding sites with remarkable affinity for a particular antigen. The variable domains are assembled by a process called V-(D)-J rearrangement and can then be subjected to somatic hypermutations which, after exposure to antigen and selection, allow affinity maturation for a particular antigen. The protein is Immunoglobulin lambda variable 8-61 of Homo sapiens (Human).